Consider the following 532-residue polypeptide: tRNA-2-methylthio-N(6)-dimethylallyladenosine synthase 2 (532 aa).

The tract at residues 1-21 (MTSTVAHGAGSAGPADDAEPM) is disordered. Positions 24–140 (RTYQVRTYGC…LPALLDRARH (117 aa)) constitute an MTTase N-terminal domain. [4Fe-4S] cluster contacts are provided by C33, C69, C103, C177, C181, and C184. The region spanning 163–399 (RESAYAAWVS…VELQEQISLE (237 aa)) is the Radical SAM core domain. One can recognise a TRAM domain in the interval 402 to 470 (RAIVGQRVEL…PHHLIADGGI (69 aa)). The tract at residues 510-532 (TSCGSAGGCGSADGAGSSAGDPQ) is disordered. Residues 523–532 (GAGSSAGDPQ) show a composition bias toward low complexity.

This sequence belongs to the methylthiotransferase family. MiaB subfamily. Monomer. [4Fe-4S] cluster serves as cofactor.

Its subcellular location is the cytoplasm. The enzyme catalyses N(6)-dimethylallyladenosine(37) in tRNA + (sulfur carrier)-SH + AH2 + 2 S-adenosyl-L-methionine = 2-methylsulfanyl-N(6)-dimethylallyladenosine(37) in tRNA + (sulfur carrier)-H + 5'-deoxyadenosine + L-methionine + A + S-adenosyl-L-homocysteine + 2 H(+). Catalyzes the methylthiolation of N6-(dimethylallyl)adenosine (i(6)A), leading to the formation of 2-methylthio-N6-(dimethylallyl)adenosine (ms(2)i(6)A) at position 37 in tRNAs that read codons beginning with uridine. This is tRNA-2-methylthio-N(6)-dimethylallyladenosine synthase 2 from Mycobacterium marinum (strain ATCC BAA-535 / M).